Reading from the N-terminus, the 367-residue chain is 3-isopropylmalate dehydrogenase (367 aa).

75–88 is a binding site for NAD(+); it reads GPKWDGIERSKRPE. 4 residues coordinate substrate: Arg-95, Arg-105, Arg-133, and Asp-230. Mg(2+) contacts are provided by Asp-230, Asp-254, and Asp-258. 288–300 is an NAD(+) binding site; it reads GSAPDIAGQDIAN.

It belongs to the isocitrate and isopropylmalate dehydrogenases family. LeuB type 1 subfamily. As to quaternary structure, homodimer. Requires Mg(2+) as cofactor. Mn(2+) serves as cofactor.

It is found in the cytoplasm. It carries out the reaction (2R,3S)-3-isopropylmalate + NAD(+) = 4-methyl-2-oxopentanoate + CO2 + NADH. Its pathway is amino-acid biosynthesis; L-leucine biosynthesis; L-leucine from 3-methyl-2-oxobutanoate: step 3/4. Catalyzes the oxidation of 3-carboxy-2-hydroxy-4-methylpentanoate (3-isopropylmalate) to 3-carboxy-4-methyl-2-oxopentanoate. The product decarboxylates to 4-methyl-2 oxopentanoate. This Psychrobacter arcticus (strain DSM 17307 / VKM B-2377 / 273-4) protein is 3-isopropylmalate dehydrogenase.